The primary structure comprises 364 residues: Methylthioribose-1-phosphate isomerase (364 aa).

The Proton donor role is filled by Asp-254.

Belongs to the eIF-2B alpha/beta/delta subunits family. MtnA subfamily.

The protein localises to the cytoplasm. It is found in the nucleus. It catalyses the reaction 5-(methylsulfanyl)-alpha-D-ribose 1-phosphate = 5-(methylsulfanyl)-D-ribulose 1-phosphate. Its pathway is amino-acid biosynthesis; L-methionine biosynthesis via salvage pathway; L-methionine from S-methyl-5-thio-alpha-D-ribose 1-phosphate: step 1/6. Its function is as follows. Catalyzes the interconversion of methylthioribose-1-phosphate (MTR-1-P) into methylthioribulose-1-phosphate (MTRu-1-P). This Drosophila ananassae (Fruit fly) protein is Methylthioribose-1-phosphate isomerase.